The sequence spans 290 residues: 4-hydroxybenzoate octaprenyltransferase (290 aa).

8 helical membrane-spanning segments follow: residues 23 to 43, 46 to 66, 99 to 119, 141 to 161, 163 to 183, 213 to 233, 234 to 254, and 268 to 288; these read IGAL…TPGV, LWIM…GCVV, LFVV…TMTI, LPQV…FAAV, ESVP…AVAY, LIIG…GELN, GLGW…VYQQ, and AFMN…MSYW.

The protein belongs to the UbiA prenyltransferase family. The cofactor is Mg(2+).

Its subcellular location is the cell inner membrane. It catalyses the reaction all-trans-octaprenyl diphosphate + 4-hydroxybenzoate = 4-hydroxy-3-(all-trans-octaprenyl)benzoate + diphosphate. It participates in cofactor biosynthesis; ubiquinone biosynthesis. In terms of biological role, catalyzes the prenylation of para-hydroxybenzoate (PHB) with an all-trans polyprenyl group. Mediates the second step in the final reaction sequence of ubiquinone-8 (UQ-8) biosynthesis, which is the condensation of the polyisoprenoid side chain with PHB, generating the first membrane-bound Q intermediate 3-octaprenyl-4-hydroxybenzoate. In Shigella flexneri, this protein is 4-hydroxybenzoate octaprenyltransferase.